We begin with the raw amino-acid sequence, 328 residues long: DNA-directed RNA polymerase subunit alpha (328 aa).

The interval Met1 to Ser231 is alpha N-terminal domain (alpha-NTD). The interval Met252–Ser328 is alpha C-terminal domain (alpha-CTD).

It belongs to the RNA polymerase alpha chain family. In terms of assembly, homodimer. The RNAP catalytic core consists of 2 alpha, 1 beta, 1 beta' and 1 omega subunit. When a sigma factor is associated with the core the holoenzyme is formed, which can initiate transcription.

It catalyses the reaction RNA(n) + a ribonucleoside 5'-triphosphate = RNA(n+1) + diphosphate. In terms of biological role, DNA-dependent RNA polymerase catalyzes the transcription of DNA into RNA using the four ribonucleoside triphosphates as substrates. The chain is DNA-directed RNA polymerase subunit alpha from Prosthecochloris aestuarii (strain DSM 271 / SK 413).